A 401-amino-acid chain; its full sequence is CCA-adding enzyme (401 aa).

Residues Gly32 and Arg35 each contribute to the ATP site. CTP contacts are provided by Gly32 and Arg35. Mg(2+) contacts are provided by Asp45 and Asp47. Residues Arg116, Asp159, Arg162, Arg165, and Arg168 each contribute to the ATP site. CTP-binding residues include Arg116, Asp159, Arg162, Arg165, and Arg168.

Belongs to the tRNA nucleotidyltransferase/poly(A) polymerase family. Bacterial CCA-adding enzyme type 3 subfamily. As to quaternary structure, homodimer. It depends on Mg(2+) as a cofactor.

It carries out the reaction a tRNA precursor + 2 CTP + ATP = a tRNA with a 3' CCA end + 3 diphosphate. It catalyses the reaction a tRNA with a 3' CCA end + 2 CTP + ATP = a tRNA with a 3' CCACCA end + 3 diphosphate. In terms of biological role, catalyzes the addition and repair of the essential 3'-terminal CCA sequence in tRNAs without using a nucleic acid template. Adds these three nucleotides in the order of C, C, and A to the tRNA nucleotide-73, using CTP and ATP as substrates and producing inorganic pyrophosphate. tRNA 3'-terminal CCA addition is required both for tRNA processing and repair. Also involved in tRNA surveillance by mediating tandem CCA addition to generate a CCACCA at the 3' terminus of unstable tRNAs. While stable tRNAs receive only 3'-terminal CCA, unstable tRNAs are marked with CCACCA and rapidly degraded. This chain is CCA-adding enzyme, found in Leuconostoc mesenteroides subsp. mesenteroides (strain ATCC 8293 / DSM 20343 / BCRC 11652 / CCM 1803 / JCM 6124 / NCDO 523 / NBRC 100496 / NCIMB 8023 / NCTC 12954 / NRRL B-1118 / 37Y).